Here is a 619-residue protein sequence, read N- to C-terminus: Interferon-activable protein 204 (619 aa).

In terms of domain architecture, Pyrin spans 1-88 (MVNEYKRIVL…AEILKKERSE (88 aa)). Positions 24-35 (LFKSLLARDLNL) match the Nuclear export signal motif. Basic and acidic residues predominate over residues 86 to 99 (RSEVTGETSLEKNG). Positions 86–223 (RSEVTGETSL…QNQNIPRGAV (138 aa)) are disordered. The span at 122 to 153 (TSATQEETSTAQAGTSTAQARTSTAQAGTSTA) shows a compositional bias: low complexity. Tandem repeats lie at residues 134-140 (AGTSTAQ), 141-147 (ARTSTAQ), and 148-154 (AGTSTAQ). A 3 X 7 AA tandem repeats of A-[GR]-T-S-T-A-Q region spans residues 134-154 (AGTSTAQARTSTAQAGTSTAQ). The Nuclear localization signal motif lies at 150–157 (TSTAQKRK). Basic and acidic residues predominate over residues 159-176 (MREEETGVKKSKAAKEPD). A compositionally biased stretch (low complexity) spans 190–206 (SPILHSSSSASSNIPSA). Residues 207-218 (KNQKSQPQNQNI) are compositionally biased toward polar residues. HIN-200 domains follow at residues 213-413 (PQNQ…IKIS) and 417-615 (NVPK…MQVI). Residues 550 to 614 (KKTERNKFIY…RSVRHSYMQV (65 aa)) are interaction with ID2.

This sequence belongs to the HIN-200 family. As to quaternary structure, interacts with UBTF. Interacts with RUNX2. Interacts with ID1, ID2 and ID3. Interacts with STING. Post-translationally, acetylated upon bacterial infection, leading to translocation from nucleus to cytoplasm and subsequent recruitment of STING to activate IFN-beta production. As to expression, present in osteoblasts (at protein level).

The protein resides in the nucleus. It localises to the nucleolus. Its subcellular location is the cytoplasm. Its function is as follows. Interferon-stimulated protein that plays a role in several biological processes including cell differentiation, autophagy and innate immunity. Cooperates with CGAS to sense dsDNA and activates the STING-dependent type I IFN pathway. Mechanistically, gets acetylated upon bacterial infection and then translocates from nucleus into cytoplasm to recruit STING for activation of TBK1-dependent IRF3 nuclear translocation and IFN-beta release. Inhibits the transcription of ribosomal RNA. May inhibit DNA binding by UBTF. Inhibits cell growth via p53/TP53 and RB1-dependent and independent pathways. Acts as a coactivator of RUNX2 during osteogenesis. May be involved in macrophage differentiation. Enables skeletal muscle and cardiac myocyte differentiation by sequestring Id proteins in the cytosol and promoting their ubiquitination and subsequent degradation. The sequence is that of Interferon-activable protein 204 (Ifi204) from Mus musculus (Mouse).